A 505-amino-acid polypeptide reads, in one-letter code: AMP phosphorylase (505 aa).

AMP contacts are provided by residues glycine 170, 196 to 201 (SRAITS), and threonine 205. Aspartate 258 serves as the catalytic Proton donor. Serine 266 and lysine 290 together coordinate AMP.

The protein belongs to the thymidine/pyrimidine-nucleoside phosphorylase family. Type 2 subfamily.

It catalyses the reaction AMP + phosphate = alpha-D-ribose 1,5-bisphosphate + adenine. The enzyme catalyses CMP + phosphate = cytosine + alpha-D-ribose 1,5-bisphosphate. The catalysed reaction is UMP + phosphate = alpha-D-ribose 1,5-bisphosphate + uracil. Functionally, catalyzes the conversion of AMP and phosphate to adenine and ribose 1,5-bisphosphate (R15P). Exhibits phosphorylase activity toward CMP and UMP in addition to AMP. Functions in an archaeal AMP degradation pathway, together with R15P isomerase and RubisCO. The sequence is that of AMP phosphorylase from Methanococcus vannielii (strain ATCC 35089 / DSM 1224 / JCM 13029 / OCM 148 / SB).